A 545-amino-acid polypeptide reads, in one-letter code: T-complex protein 1 subunit gamma (545 aa).

M1 bears the N-acetylmethionine mark. The interval 1 to 24 is disordered; the sequence is MMGHRPVLVLSQNTKRESGRKVQS. S11 carries the phosphoserine modification. K15 is covalently cross-linked (Glycyl lysine isopeptide (Lys-Gly) (interchain with G-Cter in SUMO2)). An ADP-binding site is contributed by G42. ATP is bound at residue G42. Position 93 (D93) interacts with Mg(2+). ADP-binding residues include G94, T95, T96, S97, T162, and K163. ATP is bound by residues G94, T95, and T96. S170 carries the post-translational modification Phosphoserine. K222 is modified (N6-acetyllysine). Phosphoserine occurs at positions 243 and 244. Position 247 is a phosphotyrosine (Y247). Residues K248 and K249 each participate in a glycyl lysine isopeptide (Lys-Gly) (interchain with G-Cter in SUMO2) cross-link. S252 carries the post-translational modification Phosphoserine. A disulfide bridge links C366 with C372. K381 participates in a covalent cross-link: Glycyl lysine isopeptide (Lys-Gly) (interchain with G-Cter in SUMO2). Residue G411 coordinates ADP. G411 is a binding site for ATP. 2 positions are modified to phosphothreonine: T430 and T459. G482, E483, E497, and K502 together coordinate ADP. An ATP-binding site is contributed by G482. ATP is bound at residue E497. A disordered region spans residues 526–545; it reads HKKKGDDQNRQTGAPDAGQE.

This sequence belongs to the TCP-1 chaperonin family. In terms of assembly, component of the chaperonin-containing T-complex (TRiC), a hexadecamer composed of two identical back-to-back stacked rings enclosing a protein folding chamber. Each ring is made up of eight different subunits: TCP1/CCT1, CCT2, CCT3, CCT4, CCT5, CCT6A/CCT6, CCT7, CCT8. Interacts with PACRG. Interacts with DNAAF4. Interacts with DLEC1. In terms of processing, the N-terminus is blocked.

It localises to the cytoplasm. The catalysed reaction is ATP + H2O = ADP + phosphate + H(+). Its function is as follows. Component of the chaperonin-containing T-complex (TRiC), a molecular chaperone complex that assists the folding of actin, tubulin and other proteins upon ATP hydrolysis. The TRiC complex mediates the folding of WRAP53/TCAB1, thereby regulating telomere maintenance. As part of the TRiC complex may play a role in the assembly of BBSome, a complex involved in ciliogenesis regulating transports vesicles to the cilia. The protein is T-complex protein 1 subunit gamma (Cct3) of Mus musculus (Mouse).